Here is a 210-residue protein sequence, read N- to C-terminus: High mobility group protein B2 (210 aa).

Residue Lys3 is modified to N6-acetyllysine. Residues 9–79 constitute a DNA-binding region (HMG box 1); it reads PRGKMSSYAF…RYDREMKNYV (71 aa). Cys23 carries the post-translational modification Cysteine sulfonic acid (-SO3H); alternate. Cys23 and Cys45 are oxidised to a cystine. The residue at position 30 (Lys30) is an N6-acetyllysine. Ser35 carries the post-translational modification Phosphoserine. Lys43 is modified (N6-acetyllysine). Cys45 is subject to Cysteine sulfonic acid (-SO3H); alternate. Residues 71–102 are disordered; that stretch reads YDREMKNYVPPKGDKKGKKKDPNAPKRPPSAF. N6-acetyllysine is present on Lys90. Positions 95 to 163 form a DNA-binding region, HMG box 2; it reads PKRPPSAFFL…KYEKDIAAYR (69 aa). Residue Ser100 is modified to Phosphoserine. The residue at position 106 (Cys106) is a Cysteine sulfonic acid (-SO3H). N6-acetyllysine occurs at positions 114 and 141. Residues 162-172 show a composition bias toward basic and acidic residues; that stretch reads YRAKGKSEAGK. The segment at 162 to 210 is disordered; sequence YRAKGKSEAGKKGPGRPTGSKKKNEPEDEEEEEEEEEEEDDEEEEEDEE. The interval 165–180 is required for chemotactic activity; that stretch reads KGKSEAGKKGPGRPTG. Over residues 187–210 the composition is skewed to acidic residues; it reads PEDEEEEEEEEEEEDDEEEEEDEE.

It belongs to the HMGB family. In terms of assembly, interacts with POU2F2, POU2F1 and POU3F1. Component of the RAG complex composed of core components RAG1 and RAG2, and associated component HMGB1 or HMGB2. Component of the SET complex, composed of at least ANP32A, APEX1, HMGB2, NME1, SET and TREX1. Directly interacts with SET. Interacts with LEF1. In terms of processing, reduction/oxidation of cysteine residues Cys-23, Cys-45 and Cys-106 and a possible intramolecular disulfide bond involving Cys-23 and Cys-45 give rise to different redox forms with specific functional activities in various cellular compartments: 1- fully reduced HMGB2 (HMGB2C23hC45hC106h), 2- disulfide HMGB2 (HMGB2C23-C45C106h) and 3- sulfonyl HMGB2 (HMGB2C23soC45soC106so). In terms of tissue distribution, widely expressed in embryo. In adult mainly expressed in lymphoid organs and testes. Expressed in primary spermatocytes. Expressed in the superficial zone of articular cartilage.

The protein resides in the nucleus. The protein localises to the chromosome. Its subcellular location is the cytoplasm. It is found in the secreted. Multifunctional protein with various roles in different cellular compartments. May act in a redox sensitive manner. In the nucleus is an abundant chromatin-associated non-histone protein involved in transcription, chromatin remodeling and V(D)J recombination and probably other processes. Binds DNA with a preference to non-canonical DNA structures such as single-stranded DNA. Can bent DNA and enhance DNA flexibility by looping thus providing a mechanism to promote activities on various gene promoters by enhancing transcription factor binding and/or bringing distant regulatory sequences into close proximity. Involved in V(D)J recombination by acting as a cofactor of the RAG complex: acts by stimulating cleavage and RAG protein binding at the 23 bp spacer of conserved recombination signal sequences (RSS). Proposed to be involved in the innate immune response to nucleic acids by acting as a cytoplasmic promiscuous immunogenic DNA/RNA sensor which cooperates with subsequent discriminative sensing by specific pattern recognition receptors. In the extracellular compartment acts as a chemokine. Promotes proliferation and migration of endothelial cells implicating AGER/RAGE. Has antimicrobial activity in gastrointestinal epithelial tissues. Involved in inflammatory response to antigenic stimulus coupled with pro-inflammatory activity. May play a role in germ cell differentiation. Involved in modulation of neurogenesis probably by regulation of neural stem proliferation. Involved in articular cartilage surface maintenance implicating LEF1 and the Wnt/beta-catenin pathway. The polypeptide is High mobility group protein B2 (Hmgb2) (Mus musculus (Mouse)).